Reading from the N-terminus, the 148-residue chain is 15 kDa excretory/secretory protein (148 aa).

Residues 1–19 (MFFAFAVLLIALATREAYG) form the signal peptide.

The protein to T.colubriformis 30 kDa antigenic glycoprotein.

The protein resides in the secreted. This Haemonchus contortus (Barber pole worm) protein is 15 kDa excretory/secretory protein.